Here is a 360-residue protein sequence, read N- to C-terminus: Phospho-N-acetylmuramoyl-pentapeptide-transferase (360 aa).

10 helical membrane passes run 26-46 (AIVSLLTALFISLWMGPRMIA), 72-92 (PTMGGIMILTAIVVSVLLWAY), 94-114 (SNPYVWCVLVVLVGYGIIGFV), 132-152 (WKYFWMSVIALGVAFALYLAG), 168-188 (VMPQLGLFYVLLAYFVIVGTG), 199-219 (GLAIMPTVFVAAGFALVAWAT), 236-256 (AGELVIVCTAIVGAGLGFLWF), 263-283 (VFMGDVGSLALGGALGIIAVL), 288-308 (FLLVIMGGVFVVETLSVILQV), and 338-358 (VIVRFWIISLMLVLIGLATLK).

This sequence belongs to the glycosyltransferase 4 family. MraY subfamily. Mg(2+) is required as a cofactor.

The protein resides in the cell inner membrane. It catalyses the reaction UDP-N-acetyl-alpha-D-muramoyl-L-alanyl-gamma-D-glutamyl-meso-2,6-diaminopimeloyl-D-alanyl-D-alanine + di-trans,octa-cis-undecaprenyl phosphate = di-trans,octa-cis-undecaprenyl diphospho-N-acetyl-alpha-D-muramoyl-L-alanyl-D-glutamyl-meso-2,6-diaminopimeloyl-D-alanyl-D-alanine + UMP. The protein operates within cell wall biogenesis; peptidoglycan biosynthesis. In terms of biological role, catalyzes the initial step of the lipid cycle reactions in the biosynthesis of the cell wall peptidoglycan: transfers peptidoglycan precursor phospho-MurNAc-pentapeptide from UDP-MurNAc-pentapeptide onto the lipid carrier undecaprenyl phosphate, yielding undecaprenyl-pyrophosphoryl-MurNAc-pentapeptide, known as lipid I. The chain is Phospho-N-acetylmuramoyl-pentapeptide-transferase from Citrobacter koseri (strain ATCC BAA-895 / CDC 4225-83 / SGSC4696).